The chain runs to 128 residues: SH2 domain-containing protein 1A (128 aa).

The SH2 domain occupies 6–102; it reads VYHGKISRET…GIVIPLQYPV (97 aa). Residues 67–92 are interaction with FYN SH3 domain; sequence ETAPGVHKRYFRKIKNLISAFQKPDQ. K89 bears the N6-acetyllysine mark. Positions 106–128 are disordered; sequence SSARSTQGTTGIREDPDVCLKAP. A compositionally biased stretch (basic and acidic residues) spans 117-128; that stretch reads IREDPDVCLKAP.

In terms of assembly, interacts with CD84, CD244, LY9, SLAMF1 and FYN. Interacts with NTRK1, NTRK2 and NTRK3.

Its subcellular location is the cytoplasm. Cytoplasmic adapter regulating receptors of the signaling lymphocytic activation molecule (SLAM) family such as SLAMF1, CD244, LY9, CD84, SLAMF6 and SLAMF7. In SLAM signaling seems to cooperate with SH2D1B/EAT-2. Initially it has been proposed that association with SLAMF1 prevents SLAMF1 binding to inhibitory effectors including INPP5D/SHIP1 and PTPN11/SHP-2. However, by simultaneous interactions, recruits FYN which subsequently phosphorylates and activates SLAMF1. Positively regulates CD244/2B4- and CD84-mediated natural killer (NK) cell functions. Can also promote CD48-, SLAMF6 -, LY9-, and SLAMF7-mediated NK cell activation. In the context of NK cell-mediated cytotoxicity enhances conjugate formation with target cells. May also regulate the activity of the neurotrophin receptors NTRK1, NTRK2 and NTRK3. This Macaca mulatta (Rhesus macaque) protein is SH2 domain-containing protein 1A (SH2D1A).